Here is a 276-residue protein sequence, read N- to C-terminus: Secretagogin (276 aa).

EF-hand domains follow at residues 12–47 (LDAACFWQIWQRFDKEEKGYIRETELDAFFDHLLAK), 58–93 (NVQKVKEQLMTSHNVSKEGRILMKELASMFLSEDEN), 105–140 (DNSVEFMQIWRKYDADSSGFISAAELCNFLRDLFLH), 149–184 (ELEEYTSTMMKIFDKNKDGRLDLNDLARILALQENF), 197–232 (ERKRDFEKIFAHYDVSKTGALEGPEVDGFVKDMMEL), and 240–276 (VDLDKFREILLRHCDVNKDGKIQKSELALCLGLKINP). Residues Asp25, Tyr31, Glu36, Ser73, Glu75, Arg77, Glu82, Asp118, Asp120, Ser122, Glu129, Asp162, Asn164, Asp166, Arg168, Asp173, Asp210, Ser212, Thr214, Glu221, Asp254, Asn256, Asp258, Lys260, and Glu265 each coordinate Ca(2+).

The protein resides in the cytoplasm. It localises to the secreted. Its subcellular location is the cytoplasmic vesicle. It is found in the secretory vesicle membrane. This Mus musculus (Mouse) protein is Secretagogin (Scgn).